The primary structure comprises 315 residues: Endolytic peptidoglycan transglycosylase RlpA (315 aa).

The N-terminal stretch at 1–19 (MGLALEKVCFLGVIFLISA) is a signal peptide. Cysteine 20 carries the N-palmitoyl cysteine lipid modification. A lipid anchor (S-diacylglycerol cysteine) is attached at cysteine 20. Over residues 68–79 (SDSQDSNTKDQP) the composition is skewed to basic and acidic residues. The tract at residues 68–92 (SDSQDSNTKDQPLDNGMRDSSSIQR) is disordered. An SPOR domain is found at 242–315 (SVSGGKFSLQ…YNQNAVLTRE (74 aa)).

Belongs to the RlpA family.

It is found in the cell membrane. Its function is as follows. Lytic transglycosylase with a strong preference for naked glycan strands that lack stem peptides. The chain is Endolytic peptidoglycan transglycosylase RlpA from Helicobacter pylori (strain ATCC 700392 / 26695) (Campylobacter pylori).